The following is a 400-amino-acid chain: MGAPLSTARRGMGQNLSVPNPLGFFPDHQLDPLFRANSSSPDWDFNTNKDNWPMANKVGVGGFGPGFTPPHGGLLGWSPQAQGILTTSPPDPPPASTNRRSGRKPTPVSPPLRDTHPQAMQWNSTQFHQALLDPRVRGLYFPAGGSSSETQNPVPTIASLTSSIFSKTGDPAMNMENITSGLLGPLLVLQAVCFLLTKILTIPQSLDSWWTSLNFLGVPPGCPGQNSQSPISNHLPTSCPPTCPGYRWMCLRRFIIFLFILLLCLIFLLVLLDYQGMLPVCPLLPGSTTTSTGPCKTCTTLAQGTSMFPSCCCTKPSDGNCTCIPIPSSWAFGKYLWEWASARFSWLSLLVQFVQWCVGLSPTVWLLVIWMIWYWGPNLCSILSPFIPLLPIFCYLWASI.

An N-acetylmethionine modification is found at Met1. Residue Gly2 is the site of N-myristoyl glycine; by host attachment. The tract at residues 2-119 is pre-S1; that stretch reads GAPLSTARRG…PPLRDTHPQA (118 aa). The interval 2-174 is pre-S; the sequence is GAPLSTARRG…FSKTGDPAMN (173 aa). Over 2 to 181 the chain is Virion surface; in external conformation; sequence GAPLSTARRG…AMNMENITSG (180 aa). At 2-253 the chain is on the intravirion; in internal conformation side; sequence GAPLSTARRG…PGYRWMCLRR (252 aa). N-linked (GlcNAc...) asparagine glycosylation is present at Pro4. A disordered region spans residues 70–115; it reads PHGGLLGWSPQAQGILTTSPPDPPPASTNRRSGRKPTPVSPPLRDT. A compositionally biased stretch (polar residues) spans 79 to 88; sequence PQAQGILTTS. The interval 120–174 is pre-S2; sequence MQWNSTQFHQALLDPRVRGLYFPAGGSSSETQNPVPTIASLTSSIFSKTGDPAMN. Residues 182–202 traverse the membrane as a helical segment; the sequence is LLGPLLVLQAVCFLLTKILTI. Residues 203–253 are Intravirion; in external conformation-facing; sequence PQSLDSWWTSLNFLGVPPGCPGQNSQSPISNHLPTSCPPTCPGYRWMCLRR. The chain crosses the membrane as a helical span at residues 254 to 274; it reads FIIFLFILLLCLIFLLVLLDY. Residues 275–348 lie on the Virion surface side of the membrane; that stretch reads QGMLPVCPLL…WASARFSWLS (74 aa). N-linked (GlcNAc...) asparagine; by host glycosylation occurs at Asn320. The chain crosses the membrane as a helical span at residues 349–369; the sequence is LLVQFVQWCVGLSPTVWLLVI. Over 370–375 the chain is Intravirion; the sequence is WMIWYW. A helical membrane pass occupies residues 376 to 398; it reads GPNLCSILSPFIPLLPIFCYLWA. Residues 399–400 are Virion surface-facing; that stretch reads SI.

It belongs to the orthohepadnavirus major surface antigen family. In its internal form (Li-HBsAg), interacts with the capsid protein and with the isoform S. Interacts with host chaperone CANX. In terms of assembly, associates with host chaperone CANX through its pre-S2 N glycan; this association may be essential for isoform M proper secretion. As to quaternary structure, interacts with isoform L. Interacts with the antigens of satellite virus HDV (HDVAgs); this interaction is required for encapsidation of HDV genomic RNA. In terms of processing, isoform M is N-terminally acetylated by host at a ratio of 90%, and N-glycosylated by host at the pre-S2 region. Myristoylated.

The protein resides in the virion membrane. In terms of biological role, the large envelope protein exists in two topological conformations, one which is termed 'external' or Le-HBsAg and the other 'internal' or Li-HBsAg. In its external conformation the protein attaches the virus to cell receptors and thereby initiating infection. This interaction determines the species specificity and liver tropism. This attachment induces virion internalization predominantly through caveolin-mediated endocytosis. The large envelope protein also assures fusion between virion membrane and endosomal membrane. In its internal conformation the protein plays a role in virion morphogenesis and mediates the contact with the nucleocapsid like a matrix protein. Its function is as follows. The middle envelope protein plays an important role in the budding of the virion. It is involved in the induction of budding in a nucleocapsid independent way. In this process the majority of envelope proteins bud to form subviral lipoprotein particles of 22 nm of diameter that do not contain a nucleocapsid. The polypeptide is Large envelope protein (Homo sapiens (Human)).